Consider the following 290-residue polypeptide: GTPase Era (290 aa).

An Era-type G domain is found at 2-169 (KSGFAAILGR…KNKIYENFSE (168 aa)). The segment at 10–17 (GRPSTGKS) is G1. 10–17 (GRPSTGKS) serves as a coordination point for GTP. Positions 36 to 40 (QTTRN) are G2. Positions 57-60 (DTPG) are G3. Residues 57–61 (DTPGF) and 119–122 (NKID) each bind GTP. Positions 119–122 (NKID) are G4. The segment at 148 to 150 (ISA) is G5. In terms of domain architecture, KH type-2 spans 200-276 (LKEELPYSLY…NLFLQVKLKK (77 aa)).

The protein belongs to the TRAFAC class TrmE-Era-EngA-EngB-Septin-like GTPase superfamily. Era GTPase family. In terms of assembly, monomer.

Its subcellular location is the cytoplasm. The protein resides in the cell inner membrane. Functionally, an essential GTPase that binds both GDP and GTP, with rapid nucleotide exchange. Plays a role in 16S rRNA processing and 30S ribosomal subunit biogenesis and possibly also in cell cycle regulation and energy metabolism. The protein is GTPase Era of Borreliella burgdorferi (strain ATCC 35210 / DSM 4680 / CIP 102532 / B31) (Borrelia burgdorferi).